The sequence spans 136 residues: MYAIVRGGGRQHRVAVGDVIEINAAAKGATATVGATVELPAVLVVDGPSVTTGATALADITVTGEVVGHAKGPKIRILKYKNKTGYRRRVGHRQPLALVKVTHIGPRAAADRKTAPKRASAKAAADQTTAAQATAE.

A disordered region spans residues 107-136 (RAAADRKTAPKRASAKAAADQTTAAQATAE). The segment covering 121–136 (AKAAADQTTAAQATAE) has biased composition (low complexity).

Belongs to the bacterial ribosomal protein bL21 family. Part of the 50S ribosomal subunit. Contacts protein L20.

Its function is as follows. This protein binds to 23S rRNA in the presence of protein L20. This is Large ribosomal subunit protein bL21 from Acidothermus cellulolyticus (strain ATCC 43068 / DSM 8971 / 11B).